Reading from the N-terminus, the 1240-residue chain is Phospholipid-transporting ATPase 6 (1240 aa).

Residues 1 to 75 (MARRRIRSRI…TTRYNLLTFL (75 aa)) lie on the Cytoplasmic side of the membrane. Residues 76 to 97 (PKCLYEQFHRVANFYFLVAAIL) traverse the membrane as a helical segment. Topologically, residues 98-101 (SVFP) are extracellular. A helical membrane pass occupies residues 102–124 (LSPFNKWSMIAPLVFVVGLSMGK). Topologically, residues 125-306 (EALEDWRRFM…SRIEKRMDYI (182 aa)) are cytoplasmic. The chain crosses the membrane as a helical span at residues 307-328 (IYTLFALLLTVSFISSLGFAVM). Residues 329 to 360 (TKLLMAEWWYLRPDKPESLTNPTNPLYAWVVH) are Extracellular-facing. The chain crosses the membrane as a helical span at residues 361–378 (LITALLLYGYLIPISLYV). Residues 379-943 (SIEVVKVLQA…HGHWCYKRIA (565 aa)) lie on the Cytoplasmic side of the membrane. The active-site 4-aspartylphosphate intermediate is the Asp426. Lys625 participates in a covalent cross-link: Glycyl lysine isopeptide (Lys-Gly) (interchain with G-Cter in ubiquitin). Mg(2+) contacts are provided by Asp888 and Asp892. Residues 944–963 (QMICYFFYKNITFGLTLFYF) form a helical membrane-spanning segment. At 964 to 977 (ECFTGFSGQSIYND) the chain is on the extracellular side. A helical membrane pass occupies residues 978 to 997 (SYLLLFNVVLTSLPVISLGV). Over 998 to 1027 (FEQDVPSDVCLQFPALYQQGPKNLFFDWYR) the chain is Cytoplasmic. A helical transmembrane segment spans residues 1028-1050 (ILGWMGNGVYASIVIFTLNLGIF). Residues 1051 to 1063 (HVQSFRSDGQTAD) are Extracellular-facing. The helical transmembrane segment at 1064–1086 (MNAMGTAMFTCIIWAVNVQIALT) threads the bilayer. Topologically, residues 1087-1092 (MSHFTW) are cytoplasmic. A helical transmembrane segment spans residues 1093 to 1113 (IQHVMIWGSIGAWYVFLALYG). Residues 1114–1130 (MLPVKLSGNIFHMLVEI) are Extracellular-facing. The helical transmembrane segment at 1131–1155 (LAPAPIFWLTSLLVIAATTLPYLFH) threads the bilayer. Topologically, residues 1156–1240 (ISYQRSVNPL…SNDTPSSNSQ (85 aa)) are cytoplasmic.

This sequence belongs to the cation transport ATPase (P-type) (TC 3.A.3) family. Type IV subfamily.

It localises to the cell membrane. It is found in the endomembrane system. It carries out the reaction ATP + H2O + phospholipidSide 1 = ADP + phosphate + phospholipidSide 2.. Its function is as follows. Involved in transport of phospholipids and in regulation of pollen plasma membrane lipid asymmetry. This Arabidopsis thaliana (Mouse-ear cress) protein is Phospholipid-transporting ATPase 6.